The chain runs to 846 residues: cGMP-dependent protein kinase (846 aa).

The autoinhibitory segment stretch occupies residues 1–22 (MRCNERNKKKAIFSNDDFSGED). CNMP-binding domain stretches follow at residues 51 to 166 (VCST…FIDS), 169 to 268 (VFDM…IVLG), 288 to 391 (IFRQ…LGDN), and 411 to 510 (IFRY…LQII). 6 residues coordinate 3',5'-cyclic GMP: Lys106, Gly115, Glu116, Ala118, Arg125, and Ser126. Residues Arg466, Gly475, Glu476, Ala478, Arg485, and Thr486 each coordinate 3',5'-cyclic GMP. A Protein kinase domain is found at 534-791 (LETERIIGRG…FKDIKEHAFF (258 aa)). ATP-binding positions include 540–548 (IGRGTFGTV) and Lys563. Residue Asp657 is the Proton acceptor of the active site. The 55-residue stretch at 792 to 846 (GNFNWDKLAGRLLEPPLVSKGETYAEDIDIKQIEEEDALNEGEPLDGDDSWDVDF) folds into the AGC-kinase C-terminal domain. The segment at 824-846 (IEEEDALNEGEPLDGDDSWDVDF) is disordered. Residues 825–846 (EEEDALNEGEPLDGDDSWDVDF) show a composition bias toward acidic residues.

Belongs to the protein kinase superfamily. AGC Ser/Thr protein kinase family. cGMP subfamily. Monomer. Requires Mg(2+) as cofactor. Post-translationally, autophosphorylated.

The protein localises to the cytoplasm. Its subcellular location is the endoplasmic reticulum membrane. It carries out the reaction L-seryl-[protein] + ATP = O-phospho-L-seryl-[protein] + ADP + H(+). It catalyses the reaction L-threonyl-[protein] + ATP = O-phospho-L-threonyl-[protein] + ADP + H(+). Activated by cGMP. Not activated by cAMP. cGMP binding allosterically triggers a conformational change at the alpha C-helix of cGMP-binding domain 4, which bridges the regulatory and catalytic domains, causing the capping triad, composed of Arg-477, Gln-525 and Asp-526, to form and stabilize the active conformation. The cGMP-binding domains acts cooperatively to activate PKG. Serine/threonine protein kinase which acts as a downstream effector of the second messenger cGMP. Controls the release of Ca(2+) from intracellular stores by regulating phosphoinositide biosynthesis. Ca(2+) signals are essential for merozoite and sporozoite invasion and egress from host hepatocytes and erythrocytes, and, in the mosquito vector, for gametocyte activation, and ookinete and sporozoite motility. During the host liver stage, regulates the initial invasion of host hepatocytes by sporozoites by regulating sporozoite motility and microneme exocytosis. Following parasite development in the hepatocytes, required for the release of merosomes, a vesicle containing the mature merozoites. During the asexual blood stage, required for the progression from schizont to the ring stage following merozoite invasion of host erythrocytes and for merozoite egress. Regulates merozoite egress by promoting the release of exonemes and micronemes which contain proteins essential for egress. Phosphorylates CDPK1 predominantly at the late schizont stage; phosphorylation at 'Ser-64' regulates CDPK1 protein-protein interaction and phosphorylation at 'Thr-231' may regulate CDPK1 kinase activity. In the mosquito vector, required for the initiation of gametogenesis induced by xanthurenic acid, specifically the gametocyte differentiation from the crescent-shaped form to the spherical form. Required for the gliding motility of ookinetes to reach and penetrate the midgut epithelium by promoting Ca(2+)-mediated activation of CDPK1 and CDPK4. Also required for microneme secretion in ookinete by promoting Ca(2+)-mediated activation of CDPK3. The chain is cGMP-dependent protein kinase from Plasmodium vivax (strain Salvador I).